The following is a 71-amino-acid chain: Small ribosomal subunit protein bS21 (71 aa).

Basic residues predominate over residues 49-59; the sequence is KAAAVKRAAKK. A disordered region spans residues 49–71; that stretch reads KAAAVKRAAKKVSRENARRVRMY. Residues 60–71 show a composition bias toward basic and acidic residues; sequence VSRENARRVRMY.

It belongs to the bacterial ribosomal protein bS21 family.

In Colwellia psychrerythraea (strain 34H / ATCC BAA-681) (Vibrio psychroerythus), this protein is Small ribosomal subunit protein bS21.